Here is a 315-residue protein sequence, read N- to C-terminus: Transaldolase (315 aa).

The Schiff-base intermediate with substrate role is filled by K131.

This sequence belongs to the transaldolase family. Type 1 subfamily. As to quaternary structure, homodimer.

Its subcellular location is the cytoplasm. It carries out the reaction D-sedoheptulose 7-phosphate + D-glyceraldehyde 3-phosphate = D-erythrose 4-phosphate + beta-D-fructose 6-phosphate. It participates in carbohydrate degradation; pentose phosphate pathway; D-glyceraldehyde 3-phosphate and beta-D-fructose 6-phosphate from D-ribose 5-phosphate and D-xylulose 5-phosphate (non-oxidative stage): step 2/3. Transaldolase is important for the balance of metabolites in the pentose-phosphate pathway. The chain is Transaldolase from Actinobacillus pleuropneumoniae serotype 3 (strain JL03).